The following is a 360-amino-acid chain: MTAKTPLHTTHLACGAKMVDFHGWDMPLHYGSQLNEHHAVRNDAGMFDVSHMTIVDILGAGGRQFLRKLLTNDVDQITHNGKALYSCMCNEHGGIIDDLIVYQRASDNYRVVLNSATRQNDVAWIRAKSEGFAVGLQERRELSMLAVQGPNAIAKTLSILAPAHVDAVSTLTPFECVDVDHWFFARTGYTGEDGLEIIVPNEFVTQLWNDLLNAGVTPCGLGARDTLRLEAGMLLYGQDMDETTTPLESGLTWTVKWEPEDRGFIGMGALVSQKQQGIKRKMVGLTLLDKGIMRHGQKVIIEGCPDGIITSGSYSPTLQQSIALARVPVETGEQVLVDIRGKLIPAKVGKPRFIKQGKPV.

This sequence belongs to the GcvT family. As to quaternary structure, the glycine cleavage system is composed of four proteins: P, T, L and H.

It catalyses the reaction N(6)-[(R)-S(8)-aminomethyldihydrolipoyl]-L-lysyl-[protein] + (6S)-5,6,7,8-tetrahydrofolate = N(6)-[(R)-dihydrolipoyl]-L-lysyl-[protein] + (6R)-5,10-methylene-5,6,7,8-tetrahydrofolate + NH4(+). Functionally, the glycine cleavage system catalyzes the degradation of glycine. This Legionella pneumophila (strain Lens) protein is Aminomethyltransferase.